Reading from the N-terminus, the 56-residue chain is Light-harvesting protein B-880 beta chain (56 aa).

Residues 1–22 lie on the Cytoplasmic side of the membrane; sequence AEIDRPVSLSGLTEGEAREFHG. His21 and His39 together coordinate a bacteriochlorophyll. A helical transmembrane segment spans residues 23–45; the sequence is VFMTSFMVFIAVAIVAHILAWMW. Residues 46-56 lie on the Periplasmic side of the membrane; sequence RPWIPGPEGYA.

Belongs to the antenna complex beta subunit family. In terms of assembly, the core complex is formed by different alpha and beta chains, binding bacteriochlorophyll molecules, and arranged most probably in tetrameric structures disposed around the reaction center. The non-pigmented gamma chains may constitute additional components.

It localises to the cell inner membrane. In terms of biological role, antenna complexes are light-harvesting systems, which transfer the excitation energy to the reaction centers. This chain is Light-harvesting protein B-880 beta chain, found in Afifella marina (Rhodobium marinum).